We begin with the raw amino-acid sequence, 357 residues long: Transcription factor HHO1 (357 aa).

Disordered stretches follow at residues 94–117 (TSIE…ETDI) and 171–198 (NNNI…RKNR). A compositionally biased stretch (acidic residues) spans 96–109 (IEEEVDDKDDDDEE). A compositionally biased stretch (polar residues) spans 171-182 (NNNIKSPVTTSD). An HTH myb-type domain is found at 193 to 253 (GQRKNRRCWS…HLQKYRLHAR (61 aa)). Positions 224–249 (PKQIRDIMKVDGLTNDEVKSHLQKYR) form a DNA-binding region, H-T-H motif.

It is found in the nucleus. In terms of biological role, probable factor involved in nitrate and phosphate signaling in roots. Integrates nitrate and phosphate starvation responses and adaptation of root architecture, depending on nutrient availabilities. Acts downstream of the nitrate sensor and transporter NPF6.3/NRT1.1. Represses primary root development in response to phosphate deficiency conditions, only when nitrate is present. In Arabidopsis thaliana (Mouse-ear cress), this protein is Transcription factor HHO1.